Reading from the N-terminus, the 72-residue chain is MGQSKSKEEKGISGTSRAEILPDTTYLGPLNCKSCWQKFDSFSKCHDHYLCRHCLNLLLTSSDRCPLCKYPL.

Residue Gly2 is the site of N-myristoyl glycine; by host attachment. An RING-type; atypical zinc finger spans residues 32 to 68 (CKSCWQKFDSFSKCHDHYLCRHCLNLLLTSSDRCPLC).

It belongs to the arenaviridae Z protein family. As to quaternary structure, interacts with protein NP; this interaction probably directs the encapsidated genome to budding sites. Interacts (via RING-type zinc finger) with polymerase L; this interaction inhibits viral transcription and replication, Z partially blocks the product exit tunnel for the releasing nascent RNA product. Interacts with the glycoprotein complex; this interaction plays a role in virion budding. Interacts (via RING-type zinc finger) with host EIF4E; this interaction results in conformational changes of both interacting proteins and reduces EIF4E affinity for its substrate, the 5'-m7 G cap structure. Interacts (via late-budding domain) with host TSG101; this interaction is essential for budding and release of viral particles. Interacts with host RPLP0; this interaction may serve to load ribosome-like particles inside the virion. Interacts with host PML; this interaction induces PML bodies redistribution in the cytoplasm upon viral infection. Myristoylation is required for the role of RING finger protein Z in assembly and budding.

It localises to the virion. The protein resides in the host cytoplasm. The protein localises to the host perinuclear region. Its subcellular location is the host cell membrane. Plays a crucial role in virion assembly and budding. Expressed late in the virus life cycle, it acts as an inhibitor of viral transcription and RNA synthesis by interacting with the viral polymerase L. Presumably recruits the NP encapsidated genome to cellular membranes at budding sites via direct interaction with NP. Plays critical roles in the final steps of viral release by interacting with host TSG101, a member of the vacuolar protein-sorting pathway and using other cellular host proteins involved in vesicle formation pathway. The budding of the virus progeny occurs after association of protein Z with the viral glycoprotein complex SSP-GP1-GP2 at the cell periphery, step that requires myristoylation of protein Z. Also selectively represses protein production by associating with host EIF4E. In cell-based minigenome assay, has an inhibitory effect on the ribonucleoprotein machinery (vRNP), which is responsible for the replication and transcription of the viral genome. The polypeptide is RING finger protein Z (Z) (Lymphocytic choriomeningitis virus (strain Traub) (LCMV)).